Here is a 300-residue protein sequence, read N- to C-terminus: 2-keto-3-deoxy-L-fuconate dehydrogenase (300 aa).

NAD(+) is bound by residues leucine 63–aspartate 90 and aspartate 112. Arginine 198 is a substrate binding site. Tyrosine 201 acts as the Proton acceptor in catalysis. NAD(+) is bound by residues lysine 205 and isoleucine 234–serine 238. 2 residues coordinate substrate: arginine 242 and arginine 260.

The protein belongs to the short-chain dehydrogenases/reductases (SDR) family.

Functionally, plays a role in the catabolism of L-fucose. Catalyzes the NAD(+)-dependent oxidation of 2-keo-3-deoxy-L-fuconate to 2,4-diketo-3-deoxy-L-fuconate. The protein is 2-keto-3-deoxy-L-fuconate dehydrogenase of Xanthomonas campestris pv. campestris (strain ATCC 33913 / DSM 3586 / NCPPB 528 / LMG 568 / P 25).